Reading from the N-terminus, the 601-residue chain is Glutathione-regulated potassium-efflux system protein KefB (601 aa).

A run of 13 helical transmembrane segments spans residues 4–24 (SDFL…VPLA), 29–49 (IGAV…GLGF), 55–75 (EILH…GLEL), 87–107 (IFGV…GLLM), 115–135 (AAVV…LQLM), 152–172 (VLLF…LLAG), 177–197 (HFDW…LIGG), 207–227 (FIAA…LVLG), 230–250 (LFMD…GVLL), 268–288 (GLLL…GVLY), 291–311 (LLWV…VLYL), 324–344 (MQFA…FSTA), and 356–376 (ALLL…MKLV). Positions 400–519 (KPQVIVVGFG…AGVTQFSRET (120 aa)) constitute an RCK N-terminal domain.

This sequence belongs to the monovalent cation:proton antiporter 2 (CPA2) transporter (TC 2.A.37) family. KefB subfamily. As to quaternary structure, interacts with the regulatory subunit KefG.

The protein localises to the cell inner membrane. In terms of biological role, pore-forming subunit of a potassium efflux system that confers protection against electrophiles. Catalyzes K(+)/H(+) antiport. The polypeptide is Glutathione-regulated potassium-efflux system protein KefB (Escherichia coli O17:K52:H18 (strain UMN026 / ExPEC)).